The primary structure comprises 156 residues: Cell division protein SepF (156 aa).

The interval 30 to 49 (NAAAPSTTETSVVRQDDRPK) is disordered.

This sequence belongs to the SepF family. Homodimer. Interacts with FtsZ.

It localises to the cytoplasm. In terms of biological role, cell division protein that is part of the divisome complex and is recruited early to the Z-ring. Probably stimulates Z-ring formation, perhaps through the cross-linking of FtsZ protofilaments. Its function overlaps with FtsA. The protein is Cell division protein SepF of Exiguobacterium sp. (strain ATCC BAA-1283 / AT1b).